A 160-amino-acid polypeptide reads, in one-letter code: MGVFTYETEFTSVIPPEKLFKAFILDADNLIPKVAPTAVKGTEILEGDGGVGTIKKVTFGEGSQYAYVKHRVDGIDKDNLSYSYTLIEGDALSDVIENIAYDIKLVASPDGGSIVKTTSHYHTKGDVEIKEEQVKAGKEKAAGLFKLVEAYLLANPDAYN.

The protein belongs to the BetVI family.

This Prunus armeniaca (Apricot) protein is Major allergen Pru ar 1.